The following is a 233-amino-acid chain: Ribonuclease 3 (233 aa).

The RNase III domain maps to Leu4–Gly126. Position 39 (Glu39) interacts with Mg(2+). Residue Asp43 is part of the active site. Asp112 and Glu115 together coordinate Mg(2+). Glu115 is an active-site residue. Residues Asp153 to Asp222 form the DRBM domain.

The protein belongs to the ribonuclease III family. As to quaternary structure, homodimer. Mg(2+) serves as cofactor.

The protein localises to the cytoplasm. The catalysed reaction is Endonucleolytic cleavage to 5'-phosphomonoester.. Functionally, digests double-stranded RNA. Involved in the processing of primary rRNA transcript to yield the immediate precursors to the large and small rRNAs (23S and 16S). Processes some mRNAs, and tRNAs when they are encoded in the rRNA operon. Processes pre-crRNA and tracrRNA of type II CRISPR loci if present in the organism. This is Ribonuclease 3 from Coxiella burnetii (strain RSA 331 / Henzerling II).